A 61-amino-acid polypeptide reads, in one-letter code: Small ribosomal subunit protein uS14 (61 aa).

Residues Cys24, Cys27, Cys40, and Cys43 each contribute to the Zn(2+) site.

This sequence belongs to the universal ribosomal protein uS14 family. Zinc-binding uS14 subfamily. Part of the 30S ribosomal subunit. Contacts proteins S3 and S10. It depends on Zn(2+) as a cofactor.

Its function is as follows. Binds 16S rRNA, required for the assembly of 30S particles and may also be responsible for determining the conformation of the 16S rRNA at the A site. In Carboxydothermus hydrogenoformans (strain ATCC BAA-161 / DSM 6008 / Z-2901), this protein is Small ribosomal subunit protein uS14.